Reading from the N-terminus, the 192-residue chain is Pyridoxal 5'-phosphate synthase subunit PdxT (192 aa).

G46–S48 contributes to the L-glutamine binding site. C77 serves as the catalytic Nucleophile. L-glutamine contacts are provided by residues R103 and I131–R132. Catalysis depends on charge relay system residues H167 and E169.

The protein belongs to the glutaminase PdxT/SNO family. In the presence of PdxS, forms a dodecamer of heterodimers. Only shows activity in the heterodimer.

The enzyme catalyses aldehydo-D-ribose 5-phosphate + D-glyceraldehyde 3-phosphate + L-glutamine = pyridoxal 5'-phosphate + L-glutamate + phosphate + 3 H2O + H(+). It carries out the reaction L-glutamine + H2O = L-glutamate + NH4(+). Its pathway is cofactor biosynthesis; pyridoxal 5'-phosphate biosynthesis. Its function is as follows. Catalyzes the hydrolysis of glutamine to glutamate and ammonia as part of the biosynthesis of pyridoxal 5'-phosphate. The resulting ammonia molecule is channeled to the active site of PdxS. This chain is Pyridoxal 5'-phosphate synthase subunit PdxT, found in Exiguobacterium sibiricum (strain DSM 17290 / CCUG 55495 / CIP 109462 / JCM 13490 / 255-15).